The sequence spans 186 residues: Ribosome-recycling factor (186 aa).

This sequence belongs to the RRF family.

It is found in the cytoplasm. Its function is as follows. Responsible for the release of ribosomes from messenger RNA at the termination of protein biosynthesis. May increase the efficiency of translation by recycling ribosomes from one round of translation to another. The chain is Ribosome-recycling factor from Polynucleobacter asymbioticus (strain DSM 18221 / CIP 109841 / QLW-P1DMWA-1) (Polynucleobacter necessarius subsp. asymbioticus).